The chain runs to 198 residues: Large ribosomal subunit protein uL13B (198 aa).

Position 2 is an N-acetylserine; partial (Ser-2). Residue Ser-43 is modified to Phosphoserine. Lys-176 is covalently cross-linked (Glycyl lysine isopeptide (Lys-Gly) (interchain with G-Cter in ubiquitin)). Ser-181, Ser-185, and Ser-187 each carry phosphoserine.

The protein belongs to the universal ribosomal protein uL13 family. Component of the large ribosomal subunit (LSU). Mature yeast ribosomes consist of a small (40S) and a large (60S) subunit. The 40S small subunit contains 1 molecule of ribosomal RNA (18S rRNA) and 33 different proteins (encoded by 57 genes). The large 60S subunit contains 3 rRNA molecules (25S, 5.8S and 5S rRNA) and 46 different proteins (encoded by 81 genes). In terms of processing, N-terminally acetylated by acetyltransferase NatA.

The protein resides in the cytoplasm. Functionally, component of the ribosome, a large ribonucleoprotein complex responsible for the synthesis of proteins in the cell. The small ribosomal subunit (SSU) binds messenger RNAs (mRNAs) and translates the encoded message by selecting cognate aminoacyl-transfer RNA (tRNA) molecules. The large subunit (LSU) contains the ribosomal catalytic site termed the peptidyl transferase center (PTC), which catalyzes the formation of peptide bonds, thereby polymerizing the amino acids delivered by tRNAs into a polypeptide chain. The nascent polypeptides leave the ribosome through a tunnel in the LSU and interact with protein factors that function in enzymatic processing, targeting, and the membrane insertion of nascent chains at the exit of the ribosomal tunnel. This is Large ribosomal subunit protein uL13B from Saccharomyces cerevisiae (strain ATCC 204508 / S288c) (Baker's yeast).